The chain runs to 291 residues: D-alanyl-D-alanine carboxypeptidase (291 aa).

The first 29 residues, 1-29 (MRLRRAAATVITTGALLAAGTLGATPATA), serve as a signal peptide directing secretion. Residue S64 is the Acyl-ester intermediate of the active site. The active-site Proton acceptor is the K67. S125 is a catalytic residue. K242 is a binding site for substrate.

Belongs to the peptidase S11 family.

Its subcellular location is the secreted. The enzyme catalyses Preferential cleavage: (Ac)2-L-Lys-D-Ala-|-D-Ala. Also transpeptidation of peptidyl-alanyl moieties that are N-acyl substituents of D-alanine.. It participates in cell wall biogenesis; peptidoglycan biosynthesis. In terms of biological role, removes C-terminal D-alanyl residues from sugar-peptide cell wall precursors. The chain is D-alanyl-D-alanine carboxypeptidase from Streptomyces sp. (strain K15).